The following is a 106-amino-acid chain: Protein Rev (106 aa).

Residues 8-16 (LIKFLYQSN) form a homomultimerization region. Residues 14–39 (QSNPPPKPEGTRQARRNRRRRWRERQ) are disordered. Positions 24–40 (TRQARRNRRRRWRERQR) match the Nuclear localization signal and RNA-binding (RRE) motif. Residues 26–37 (QARRNRRRRWRE) show a composition bias toward basic residues. Positions 63–74 (LQLPPLERLTLD) match the Nuclear export signal and binding to XPO1 motif. Phosphoserine; by host is present on residues Ser-82 and Ser-89. Residues 82 to 106 (SGTQGVGSPQILVESPTVLESGTKE) form a disordered region.

Belongs to the HIV-1 REV protein family. As to quaternary structure, homomultimer; when bound to the RRE. Multimeric assembly is essential for activity and may involve XPO1. Binds to human KPNB1, XPO1, TNPO1, RANBP5 and IPO7. Interacts with the viral Integrase. Interacts with human KHDRBS1. Interacts with human NAP1; this interaction decreases Rev multimerization and stimulates its activity. Interacts with human DEAD-box helicases DDX3 and DDX24; these interactions may serve for viral RNA export to the cytoplasm and packaging, respectively. Interacts with human PSIP1; this interaction may inhibit HIV-1 DNA integration by promoting dissociation of the Integrase-LEDGF/p75 complex. Post-translationally, asymmetrically arginine dimethylated at one site by host PRMT6. Methylation impairs the RNA-binding activity and export of viral RNA from the nucleus to the cytoplasm. In terms of processing, phosphorylated by protein kinase CK2. Presence of, and maybe binding to the N-terminus of the regulatory beta subunit of CK2 is necessary for CK2-mediated Rev's phosphorylation.

It is found in the host nucleus. The protein resides in the host nucleolus. It localises to the host cytoplasm. Functionally, escorts unspliced or incompletely spliced viral pre-mRNAs (late transcripts) out of the nucleus of infected cells. These pre-mRNAs carry a recognition sequence called Rev responsive element (RRE) located in the env gene, that is not present in fully spliced viral mRNAs (early transcripts). This function is essential since most viral proteins are translated from unspliced or partially spliced pre-mRNAs which cannot exit the nucleus by the pathway used by fully processed cellular mRNAs. Rev itself is translated from a fully spliced mRNA that readily exits the nucleus. Rev's nuclear localization signal (NLS) binds directly to KPNB1/Importin beta-1 without previous binding to KPNA1/Importin alpha-1. KPNB1 binds to the GDP bound form of RAN (Ran-GDP) and targets Rev to the nucleus. In the nucleus, the conversion from Ran-GDP to Ran-GTP dissociates Rev from KPNB1 and allows Rev's binding to the RRE in viral pre-mRNAs. Rev multimerization on the RRE via cooperative assembly exposes its nuclear export signal (NES) to the surface. Rev can then form a complex with XPO1/CRM1 and Ran-GTP, leading to nuclear export of the complex. Conversion from Ran-GTP to Ran-GDP mediates dissociation of the Rev/RRE/XPO1/RAN complex, so that Rev can return to the nucleus for a subsequent round of export. Beside KPNB1, also seems to interact with TNPO1/Transportin-1, RANBP5/IPO5 and IPO7/RANBP7 for nuclear import. The nucleoporin-like HRB/RIP is an essential cofactor that probably indirectly interacts with Rev to release HIV RNAs from the perinuclear region to the cytoplasm. The sequence is that of Protein Rev from Homo sapiens (Human).